A 218-amino-acid chain; its full sequence is Adenylate kinase (218 aa).

ATP is bound at residue 10 to 15; the sequence is GVGKGT. The interval 30–59 is NMP; the sequence is STGDMLRSAIKQGTELGLKAKSFIDKGELV. AMP is bound by residues Thr-31, Arg-36, 57-59, 86-89, and Gln-93; these read ELV and GFPR. Residues 127–164 are LID; sequence GRRIAPSTGKVYHVVYNPPKVEGKCDETGEDLIIREDD. ATP contacts are provided by residues Arg-128 and 137–138; that span reads VY. AMP contacts are provided by Arg-161 and Arg-172. Gln-200 is a binding site for ATP.

Belongs to the adenylate kinase family. As to quaternary structure, monomer.

The protein localises to the cytoplasm. The enzyme catalyses AMP + ATP = 2 ADP. The protein operates within purine metabolism; AMP biosynthesis via salvage pathway; AMP from ADP: step 1/1. Catalyzes the reversible transfer of the terminal phosphate group between ATP and AMP. Plays an important role in cellular energy homeostasis and in adenine nucleotide metabolism. This chain is Adenylate kinase, found in Chloroherpeton thalassium (strain ATCC 35110 / GB-78).